Reading from the N-terminus, the 107-residue chain is UPF0145 protein ECA2666 (107 aa).

Belongs to the UPF0145 family.

This is UPF0145 protein ECA2666 from Pectobacterium atrosepticum (strain SCRI 1043 / ATCC BAA-672) (Erwinia carotovora subsp. atroseptica).